The primary structure comprises 120 residues: Large ribosomal subunit protein bL19 (120 aa).

The protein belongs to the bacterial ribosomal protein bL19 family.

In terms of biological role, this protein is located at the 30S-50S ribosomal subunit interface and may play a role in the structure and function of the aminoacyl-tRNA binding site. This Acaryochloris marina (strain MBIC 11017) protein is Large ribosomal subunit protein bL19.